We begin with the raw amino-acid sequence, 99 residues long: uncharacterized protein (99 aa).

The signal sequence occupies residues 1-19 (MLGMIRWVVEGTLVAMLLS). The tract at residues 71-99 (DGFGRINDSGPKRRGRDQSQYSSRFVELD) is disordered.

The protein localises to the cytoplasm. This is an uncharacterized protein from Saccharomyces cerevisiae (strain ATCC 204508 / S288c) (Baker's yeast).